Here is a 727-residue protein sequence, read N- to C-terminus: Broad-complex core protein isoforms 1/2/3/4/5 (727 aa).

One can recognise a BTB domain in the interval 32–97 (VDVTLACEGR…IYHGEVNVHQ (66 aa)). A compositionally biased stretch (polar residues) spans 135 to 149 (NSGGRTPLNTHTQSL). 5 disordered regions span residues 135–185 (NSGG…SLPS), 218–378 (RGSD…IGDG), 445–496 (INNS…RPTA), 532–583 (PQQQ…ANTP), and 604–626 (STSG…SGGL). Residues 227-238 (SGAVGSGSNNNS) are compositionally biased toward low complexity. A compositionally biased stretch (gly residues) spans 281–298 (TGNGNSGNGNGNGNGASN). Basic and acidic residues predominate over residues 341 to 355 (NDEHSNDSTGEHDAN). Composition is skewed to low complexity over residues 445 to 460 (INNS…NNNN), 475 to 495 (TPSP…TRPT), and 533 to 568 (QQQQ…QQQQ). 2 consecutive C2H2-type zinc fingers follow at residues 636 to 659 (FRCN…QNVH) and 666 to 689 (PVCN…SIYH). Residues 694-727 (QPKQEPGVGATQAAANSFYHQQHQQQQLNHHSSS) are disordered. A compositionally biased stretch (low complexity) spans 713–727 (HQQHQQQQLNHHSSS).

Its subcellular location is the nucleus. Functionally, broad-complex proteins are required for puffing and transcription of salivary gland late genes during metamorphosis. This is Broad-complex core protein isoforms 1/2/3/4/5 (br) from Drosophila melanogaster (Fruit fly).